Consider the following 296-residue polypeptide: Nitrogenase iron protein (296 aa).

ATP is bound at residue 11-18 (GKGGIGKS). C99 provides a ligand contact to [4Fe-4S] cluster. R102 is modified (ADP-ribosylarginine; by dinitrogenase reductase ADP-ribosyltransferase). [4Fe-4S] cluster is bound at residue C133.

It belongs to the NifH/BchL/ChlL family. In terms of assembly, homodimer. Requires [4Fe-4S] cluster as cofactor. Post-translationally, the reversible ADP-ribosylation of Arg-102 inactivates the nitrogenase reductase and regulates nitrogenase activity.

It catalyses the reaction N2 + 8 reduced [2Fe-2S]-[ferredoxin] + 16 ATP + 16 H2O = H2 + 8 oxidized [2Fe-2S]-[ferredoxin] + 2 NH4(+) + 16 ADP + 16 phosphate + 6 H(+). Functionally, the key enzymatic reactions in nitrogen fixation are catalyzed by the nitrogenase complex, which has 2 components: the iron protein and the molybdenum-iron protein. This Sinorhizobium fredii (strain NBRC 101917 / NGR234) protein is Nitrogenase iron protein (nifH1).